The following is a 316-amino-acid chain: Protease HtpX homolog (316 aa).

Residues 16-36 traverse the membrane as a helical segment; sequence LFMALGFTIGGTGGAMIALVV. Residue His130 participates in Zn(2+) binding. Glu131 is an active-site residue. His134 is a Zn(2+) binding site. 2 helical membrane-spanning segments follow: residues 145 to 165 and 174 to 194; these read MTAT…FFGA and LATI…QMAI. Glu199 contributes to the Zn(2+) binding site. The interval 285-316 is disordered; the sequence is PNFAALSERRGSVSSVPRTRRRSSALDPNGRG.

It belongs to the peptidase M48B family. Requires Zn(2+) as cofactor.

It is found in the cell inner membrane. The polypeptide is Protease HtpX homolog (Rhizorhabdus wittichii (strain DSM 6014 / CCUG 31198 / JCM 15750 / NBRC 105917 / EY 4224 / RW1) (Sphingomonas wittichii)).